Consider the following 558-residue polypeptide: AP2-like ethylene-responsive transcription factor AIL5 (558 aa).

The segment covering 1–54 (MKNNNNKSSSSSSYDSSLSPSSSSSSHQNWLSFSLSNNNNNFNSSSNPNLTSST) has biased composition (low complexity). 3 disordered regions span residues 1-65 (MKNN…PSHL), 74-93 (SPVE…ATAV), and 166-195 (HSSE…KNVE). DNA-binding regions (AP2/ERF) lie at residues 203 to 269 (IYRG…TNFP) and 305 to 363 (MYRG…TNFD). The interval 387-406 (SPATAAADKTVDLSPSDSPS) is disordered.

It belongs to the AP2/ERF transcription factor family. AP2 subfamily. In terms of tissue distribution, expressed in roots, seedlings, inflorescence, and siliques. Also detected at low levels in leaves.

The protein resides in the nucleus. Probably acts as a transcriptional activator. Binds to the GCC-box pathogenesis-related promoter element. May be involved in the regulation of gene expression by stress factors and by components of stress signal transduction pathways. Involved in the regulation of floral organs size. This is AP2-like ethylene-responsive transcription factor AIL5 from Arabidopsis thaliana (Mouse-ear cress).